Consider the following 168-residue polypeptide: Vitelline membrane protein Vm26Ab (168 aa).

Residues 1–23 (MAFNFGHLLIAGLVALSAVSSET) form the signal peptide. Residues 24-42 (IQLQPTQGILIPAPLAENI) constitute a propeptide, removed between stage 11 and 14 of oogenesis. The tract at residues 43–46 (RVSR) is essential for N-terminal propeptide removal. Potential serine protease cleavage site. An 8 X 8 AA approximate repeats of P-[AS]-Y-S-A-P-A-[AS] region spans residues 52 to 119 (YGAAPAAPSY…PAYSAPASIP (68 aa)). The stretch at 55–58 (APAA) is one 1; half-length repeat. Copy 2 of the repeat occupies 59–66 (PSYSAPAA). The stretch at 70–77 (QAYSAPAA) is one 3; approximate repeat. 5 repeat units span residues 78–85 (PAYSAPAA), 86–93 (PAYSAPAA), 94–101 (PAYSAPAA), 102–109 (PAYSAPAA), and 110–117 (PAYSAPAS). The 38-residue stretch at 117–154 (SIPSPPCPKNYLFSCQPSLQPVPCSAPAQSYGSAGAYS) folds into the VM domain. The propeptide at 155-168 (QYVPQYAVPFVREL) is removed between stage 9 and 12 of oogenesis.

The protein belongs to the vitelline membrane protein family. As to quaternary structure, interacts with vml and Vm26Aa; forms part of a disulfide-linked network within the vitelline membrane of stage 10 egg chambers. Post-translationally, proteolytically processed after secretion into the perivitelline space. Undergoes several proteolytic processing steps during formation of the vitelline membrane; an initial processing step removing a C-terminal propeptide occurs between stage 9 and 12 of oogenesis while a second removing a N-terminal propeptide occurs between stage 11 and 14. In terms of processing, becomes part of a disulfide-linked network including other vitelline membrane proteins, including vml and Vm26Aa, during vitelline membrane biogenesis and maturation. Cys-123, Cys-131 and Cys-140 are involved in disulfide network formation, with Cys-131 being the most important. Undergoes both disulfide and non-disulfide cross-linking upon incorporation into the vitelline membrane. As to expression, follicle cells.

It localises to the secreted. It is found in the extracellular space. The protein resides in the extracellular matrix. Major early eggshell protein secreted by follicle cells into the perivitelline space and incorporated into the vitelline membrane. Involved in vitelline membrane biogenesis; forms a cross-linked network with other vitelline membrane components. This is Vitelline membrane protein Vm26Ab from Drosophila melanogaster (Fruit fly).